The following is a 462-amino-acid chain: tRNA modification GTPase MnmE (462 aa).

3 residues coordinate (6S)-5-formyl-5,6,7,8-tetrahydrofolate: Arg-22, Glu-87, and Arg-126. The TrmE-type G domain maps to Gly-220–Leu-382. Asn-230 lines the K(+) pocket. GTP contacts are provided by residues Asn-230–Ser-235, Ser-249–Thr-255, and Asp-274–Gly-277. Mg(2+) is bound at residue Ser-234. Ser-249, Ile-251, and Thr-254 together coordinate K(+). Thr-255 contributes to the Mg(2+) binding site. Lys-462 provides a ligand contact to (6S)-5-formyl-5,6,7,8-tetrahydrofolate.

This sequence belongs to the TRAFAC class TrmE-Era-EngA-EngB-Septin-like GTPase superfamily. TrmE GTPase family. As to quaternary structure, homodimer. Heterotetramer of two MnmE and two MnmG subunits. It depends on K(+) as a cofactor.

The protein localises to the cytoplasm. Functionally, exhibits a very high intrinsic GTPase hydrolysis rate. Involved in the addition of a carboxymethylaminomethyl (cmnm) group at the wobble position (U34) of certain tRNAs, forming tRNA-cmnm(5)s(2)U34. The polypeptide is tRNA modification GTPase MnmE (Moorella thermoacetica (strain ATCC 39073 / JCM 9320)).